The sequence spans 268 residues: DNA repair protein RecO (268 aa).

The protein belongs to the RecO family.

Functionally, involved in DNA repair and RecF pathway recombination. This is DNA repair protein RecO from Parasynechococcus marenigrum (strain WH8102).